The sequence spans 461 residues: Lysosomal proton-coupled steroid conjugate and bile acid symporter SLC46A3 (461 aa).

The first 25 residues, Met-1–Thr-25, serve as a signal peptide directing secretion. At Gln-26–Asn-73 the chain is on the extracellular side. Asn-38, Asn-46, and Asn-53 each carry an N-linked (GlcNAc...) asparagine glycan. Residues Leu-74–Ile-94 traverse the membrane as a helical segment. The Cytoplasmic portion of the chain corresponds to Ser-95–Lys-101. The helical transmembrane segment at Phe-102 to Phe-124 threads the bilayer. Residues Ala-125–Ala-133 are Extracellular-facing. A helical transmembrane segment spans residues Ser-134 to Val-156. The Cytoplasmic portion of the chain corresponds to Asp-157–Ala-170. The chain crosses the membrane as a helical span at residues Ile-171–Ile-191. Residues Arg-192–Glu-197 lie on the Extracellular side of the membrane. The helical transmembrane segment at Trp-198–Leu-218 threads the bilayer. Topologically, residues Gly-219–Cys-261 are cytoplasmic. Residues Leu-262–Ile-282 form a helical membrane-spanning segment. Residues Leu-283–Glu-294 are Extracellular-facing. Residues Val-295–Ile-315 form a helical membrane-spanning segment. Residues Trp-316 to Asp-324 lie on the Cytoplasmic side of the membrane. A helical membrane pass occupies residues Ile-325 to Ala-345. The Extracellular portion of the chain corresponds to Ser-346–Thr-347. A helical transmembrane segment spans residues Thr-348–Leu-368. Topologically, residues Arg-369–Gly-382 are cytoplasmic. Residues Thr-383–Phe-403 form a helical membrane-spanning segment. Residues Asn-404 to Pro-415 lie on the Extracellular side of the membrane. Residues Gly-416–Val-436 traverse the membrane as a helical segment. Over Lys-437–Arg-461 the chain is Cytoplasmic. The Tyrosine-based lysosomal-sorting motif motif lies at Tyr-446–Leu-449.

It belongs to the major facilitator superfamily. SLC46A family.

The protein localises to the lysosome membrane. It carries out the reaction estrone 3-sulfate(out) + n H(+)(out) = estrone 3-sulfate(in) + n H(+)(in). It catalyses the reaction 25-hydroxyvitamin D3 sulfate(out) + n H(+)(out) = 25-hydroxyvitamin D3 sulfate(in) + n H(+)(in). The enzyme catalyses cholate(out) + n H(+)(out) = cholate(in) + n H(+)(in). The catalysed reaction is glycocholate(out) + n H(+)(out) = glycocholate(in) + n H(+)(in). It carries out the reaction taurocholate(out) + n H(+)(out) = taurocholate(in) + n H(+)(in). It catalyses the reaction dehydroepiandrosterone 3-sulfate(out) + n H(+)(out) = dehydroepiandrosterone 3-sulfate(in) + n H(+)(in). The enzyme catalyses N-acetyl-D-muramoyl-L-alanyl-D-isoglutamine(out) + n H(+)(out) = N-acetyl-D-muramoyl-L-alanyl-D-isoglutamine(in) + n H(+)(in). The catalysed reaction is 2',3'-cGAMP(out) + n H(+)(out) = 2',3'-cGAMP(in) + n H(+)(in). Functionally, lysosomal proton-coupled steroid conjugate and bile acid transporter. Preferentially recognizes lipophilic steroid conjugates or bile acis as endogenous substrates and seems to mediate escape from lysosomes to the cytoplasm. Modulates hepatic cytosolic copper homeostasis, maybe acting as a lysosomal copper transporter and sequestering copper ions in the lysosome. Transports catabolites of non-cleavable antibody-drug conjugates from the lysosome to the cytoplasm. Delivers pathogen-associated molecular patterns to cytosolic pattern recognition receptors as part of the innate immune response to microbes. Selectively transports bacterial muramyl dipeptide (MDP) into the cytosol for recognition by NOD2, triggering inflammatory responses. Likely acts as a redundant importer of cyclic GMP-AMP dinucleotides (cGAMPs) in monocyte and macrophage cell lineages. The transport mechanism, its electrogenicity and stoichiometry remain to be elucidated. This chain is Lysosomal proton-coupled steroid conjugate and bile acid symporter SLC46A3, found in Homo sapiens (Human).